A 251-amino-acid polypeptide reads, in one-letter code: Sugar fermentation stimulation protein homolog (251 aa).

It belongs to the SfsA family.

The sequence is that of Sugar fermentation stimulation protein homolog from Yersinia pseudotuberculosis serotype O:1b (strain IP 31758).